A 331-amino-acid polypeptide reads, in one-letter code: tRNA N6-adenosine threonylcarbamoyltransferase (331 aa).

Fe cation-binding residues include His109, His113, and Tyr130. Residues 130-134 (YLSGG), Asp162, Asp183, and Ser262 contribute to the substrate site. Asp290 lines the Fe cation pocket.

It belongs to the KAE1 / TsaD family. It depends on Fe(2+) as a cofactor.

It localises to the cytoplasm. It carries out the reaction L-threonylcarbamoyladenylate + adenosine(37) in tRNA = N(6)-L-threonylcarbamoyladenosine(37) in tRNA + AMP + H(+). Required for the formation of a threonylcarbamoyl group on adenosine at position 37 (t(6)A37) in tRNAs that read codons beginning with adenine. Is probably involved in the transfer of the threonylcarbamoyl moiety of threonylcarbamoyl-AMP (TC-AMP) to the N6 group of A37. The sequence is that of tRNA N6-adenosine threonylcarbamoyltransferase from Saccharolobus islandicus (strain Y.G.57.14 / Yellowstone #1) (Sulfolobus islandicus).